Consider the following 500-residue polypeptide: ATP synthase subunit alpha (500 aa).

An ATP-binding site is contributed by 169 to 176 (GDRQTGKT).

Belongs to the ATPase alpha/beta chains family. In terms of assembly, F-type ATPases have 2 components, CF(1) - the catalytic core - and CF(0) - the membrane proton channel. CF(1) has five subunits: alpha(3), beta(3), gamma(1), delta(1), epsilon(1). CF(0) has three main subunits: a(1), b(2) and c(9-12). The alpha and beta chains form an alternating ring which encloses part of the gamma chain. CF(1) is attached to CF(0) by a central stalk formed by the gamma and epsilon chains, while a peripheral stalk is formed by the delta and b chains.

It is found in the cell membrane. The enzyme catalyses ATP + H2O + 4 H(+)(in) = ADP + phosphate + 5 H(+)(out). Functionally, produces ATP from ADP in the presence of a proton gradient across the membrane. The alpha chain is a regulatory subunit. The protein is ATP synthase subunit alpha of Lactococcus lactis subsp. lactis (strain IL1403) (Streptococcus lactis).